A 295-amino-acid polypeptide reads, in one-letter code: ESX-3 secretion-associated protein EspG3 (295 aa).

The protein belongs to the EspG family. As to quaternary structure, interacts specifically with ESX-3-dependent PE/PPE proteins.

Its subcellular location is the cytoplasm. Its function is as follows. Specific chaperone for cognate PE/PPE proteins. Plays an important role in preventing aggregation of PE/PPE dimers. This is ESX-3 secretion-associated protein EspG3 from Mycobacterium tuberculosis (strain CDC 1551 / Oshkosh).